A 427-amino-acid chain; its full sequence is Enolase (427 aa).

Gln-162 contributes to the (2R)-2-phosphoglycerate binding site. Glu-204 functions as the Proton donor in the catalytic mechanism. Asp-241, Glu-282, and Asp-309 together coordinate Mg(2+). Positions 334, 363, 364, and 385 each coordinate (2R)-2-phosphoglycerate. The active-site Proton acceptor is Lys-334.

It belongs to the enolase family. Mg(2+) serves as cofactor.

The protein localises to the cytoplasm. The protein resides in the secreted. It is found in the cell surface. It carries out the reaction (2R)-2-phosphoglycerate = phosphoenolpyruvate + H2O. Its pathway is carbohydrate degradation; glycolysis; pyruvate from D-glyceraldehyde 3-phosphate: step 4/5. In terms of biological role, catalyzes the reversible conversion of 2-phosphoglycerate (2-PG) into phosphoenolpyruvate (PEP). It is essential for the degradation of carbohydrates via glycolysis. The chain is Enolase from Frankia casuarinae (strain DSM 45818 / CECT 9043 / HFP020203 / CcI3).